Reading from the N-terminus, the 405-residue chain is Divinyl chlorophyllide a 8-vinyl-reductase, chloroplastic (405 aa).

A chloroplast-targeting transit peptide spans 1–58; it reads MAALLLSSHLTAASSSSTTSPTARPAPSFVSFRAANAAPKGARRGWPFLASSVEPPPA.

Its subcellular location is the plastid. It localises to the chloroplast. The catalysed reaction is protochlorophyllide a + NADP(+) = 3,8-divinyl protochlorophyllide a + NADPH + H(+). It functions in the pathway porphyrin-containing compound metabolism; chlorophyll biosynthesis. Catalyzes the conversion of divinyl chlorophyllide to monovinyl chlorophyllide. Reduces the 8-vinyl group of the tetrapyrrole to an ethyl group using NADPH as the reductant. Can use (3,8-divinyl)-chlorophyllide a (DV-Chlidea) &gt; (3,8-divinyl)-chlorophyll a (DV-Chla) &gt; (3,8-divinyl)-protochlorophyllide a (DV-Pchlidea) &gt; (3,8-divinyl)-magnesium-protoporphyrin IX monomethyl ester (DV-MPE) &gt; (3,8-divinyl)-magnesium-protoporphyrin IX (DV-Mg-Proto) as substrates. This chain is Divinyl chlorophyllide a 8-vinyl-reductase, chloroplastic (DVR), found in Oryza sativa subsp. indica (Rice).